The chain runs to 299 residues: Probable inactive heme oxygenase 2, chloroplastic (299 aa).

The segment covering 1–15 (MASLLRPTPLLSTPR) has biased composition (low complexity). Disordered stretches follow at residues 1 to 20 (MASL…LTHS), 45 to 70 (LCRS…KQYP), and 96 to 126 (DLSE…EETW). The transit peptide at 1–83 (MASLLRPTPL…IGITEEMRFV (83 aa)) directs the protein to the chloroplast. The span at 46–57 (CRSTPTPSQQKA) shows a compositional bias: polar residues. Over residues 58–67 (SQRKRTRYRK) the composition is skewed to basic residues. The span at 105 to 122 (EKEEEEEEEDDDDDDEVK) shows a compositional bias: acidic residues.

Belongs to the heme oxygenase family. Widely expressed at low levels.

The protein resides in the plastid. Its subcellular location is the chloroplast. Its function is as follows. Probable inactive heme oxygenase. Binds protoporphyrin IX, a precursor for both heme and chlorophyll biosynthesis. Plays a minor role in phytochrome assembly and photomorphogenesis. This Arabidopsis thaliana (Mouse-ear cress) protein is Probable inactive heme oxygenase 2, chloroplastic (HO2).